The primary structure comprises 173 residues: MKSNKFSNKNKINEMITAKKVKLVDQDSVMVGVVDIEEALSRARSVNLDLVEIVHDDEYPLCKIFDYSKYRYSHKKKISDSKKKQKTIIVKELKFKLNIGDNDYNVKLNMIRGFIERGDKVKISLKFIGREILHPEVGMEIIERLIKDTSDIAKPENLPKREGNLINMILTTK.

The protein belongs to the IF-3 family. Monomer.

It is found in the cytoplasm. Its function is as follows. IF-3 binds to the 30S ribosomal subunit and shifts the equilibrium between 70S ribosomes and their 50S and 30S subunits in favor of the free subunits, thus enhancing the availability of 30S subunits on which protein synthesis initiation begins. This is Translation initiation factor IF-3 from Ehrlichia ruminantium (strain Gardel).